The sequence spans 526 residues: MSTAVRPDEVSSILRKQLAGFESEADVYDVGTVLQVGDGIARIYGLSKVAAGELLEFPHNVMGMALNLEEDNVGAVLFGESNAVKEGDTVKRTNILASIPVGEAMLGRVINPLGEPIDGKGPINTDIRLPLERRAPGVIFRKSVHEPLQTGLKAIDAMIPIGRGQRELIIGDRQTGKTAVALDTIINQKGKGVQCIYVAIGLKGSTVAQVVNTLEKYGAMEYTTVVSATASDPAPLQFIAPFAGATIGEFFRDTGRHALVVYDDLSKQAVAYRQLSLLLRRPPGREAYPGDVFYLHSRLLERAAKITDDIEVAKKMNDLPEPLKPLVKGGGSLTALPVIETQAGDVSAYIPTNVISITDGQIFLESNLFNAGQRPAINVGISVSRVGGAAQIKAMKKVAGTLRLDLAQFRELEAFSKFGSDLDKSTKAQLDRGARLVEILKQGQYIPMPVEKQVAIIFIGTQGLLDSVDLKQVRRFEEEFLAMLEQKHPEILSSIAEKGTLESDIASKLKELGEKYVASFKEKSKA.

171–178 (GDRQTGKT) serves as a coordination point for ATP.

The protein belongs to the ATPase alpha/beta chains family. F-type ATPases have 2 components, CF(1) - the catalytic core - and CF(0) - the membrane proton channel. CF(1) has five subunits: alpha(3), beta(3), gamma(1), delta(1), epsilon(1). CF(0) has four main subunits: a(1), b(1), b'(1) and c(9-12).

It localises to the cell inner membrane. The catalysed reaction is ATP + H2O + 4 H(+)(in) = ADP + phosphate + 5 H(+)(out). Its function is as follows. Produces ATP from ADP in the presence of a proton gradient across the membrane. The alpha chain is a regulatory subunit. In Chlorobaculum tepidum (strain ATCC 49652 / DSM 12025 / NBRC 103806 / TLS) (Chlorobium tepidum), this protein is ATP synthase subunit alpha.